The chain runs to 289 residues: Ribosomal RNA small subunit methyltransferase A (289 aa).

Positions 33, 35, 60, 81, 111, and 130 each coordinate S-adenosyl-L-methionine.

It belongs to the class I-like SAM-binding methyltransferase superfamily. rRNA adenine N(6)-methyltransferase family. RsmA subfamily.

It localises to the cytoplasm. The enzyme catalyses adenosine(1518)/adenosine(1519) in 16S rRNA + 4 S-adenosyl-L-methionine = N(6)-dimethyladenosine(1518)/N(6)-dimethyladenosine(1519) in 16S rRNA + 4 S-adenosyl-L-homocysteine + 4 H(+). Its function is as follows. Specifically dimethylates two adjacent adenosines (A1518 and A1519) in the loop of a conserved hairpin near the 3'-end of 16S rRNA in the 30S particle. May play a critical role in biogenesis of 30S subunits. This is Ribosomal RNA small subunit methyltransferase A from Corynebacterium efficiens (strain DSM 44549 / YS-314 / AJ 12310 / JCM 11189 / NBRC 100395).